A 2275-amino-acid chain; its full sequence is Multifunctional protein pyrABCN (2275 aa).

The tract at residues 1-440 is GATase (Glutamine amidotransferase); the sequence is MPETVGHEEP…PGPRDTEYLF (440 aa). L-glutamine is bound by residues serine 102, glycine 313, and glycine 315. Positions 265-453 constitute a Glutamine amidotransferase type-1 domain; sequence RVLCLDVGLK…INAIKDTIAS (189 aa). Cysteine 342 functions as the Nucleophile; for GATase activity in the catalytic mechanism. Residues leucine 343, glutamine 346, asparagine 384, glycine 386, and tyrosine 387 each contribute to the L-glutamine site. Residues histidine 426 and glutamate 428 each act as for GATase activity in the active site. The tract at residues 441-482 is linker; it reads DVFINAIKDTIASPEALQKPVNFPGGAVAENIKASPRVSVKK. A CPSase (Carbamoyl-phosphate synthase) region spans residues 483–1522; that stretch reads VLILGSGGLS…TNVKNAKILI (1040 aa). Residues arginine 600, arginine 640, glycine 646, glycine 647, arginine 677, methionine 679, glutamate 684, glycine 710, isoleucine 711, histidine 712, glutamine 753, and glutamate 767 each coordinate ATP. 2 ATP-grasp domains span residues 604 to 796 and 1139 to 1330; these read ARSM…KLGL and SRML…KAMI. The Mg(2+) site is built by glutamine 753, glutamate 767, and asparagine 769. Mn(2+)-binding residues include glutamine 753, glutamate 767, and asparagine 769. Residues arginine 1175, lysine 1214, isoleucine 1216, glutamate 1221, glycine 1246, valine 1247, histidine 1248, serine 1249, glutamine 1289, and glutamate 1301 each contribute to the ATP site. Mg(2+)-binding residues include glutamine 1289, glutamate 1301, and asparagine 1303. The Mn(2+) site is built by glutamine 1289, glutamate 1301, and asparagine 1303. The MGS-like domain occupies 1396–1575; sequence FKLPKRNILL…KDFEAVTKAS (180 aa). Positions 1523–1532 are linker; sequence EAIARHYALN. The defective DHOase domain stretch occupies residues 1533-1862; it reads VQTIDYQTSH…FQGKTSCLDS (330 aa). The tract at residues 1863-1882 is disordered; that stretch reads EITPDAPKGSDMSGHRIVPA. The linker stretch occupies residues 1863-1953; sequence EITPDAPKGS…LQMLSRSPFK (91 aa). An ATCase (Aspartate transcarbamylase) region spans residues 1954 to 2258; that stretch reads QKHVLSVNQF…EFDMLMWMQM (305 aa). Residues arginine 2006 and threonine 2007 each contribute to the carbamoyl phosphate site. Lysine 2034 lines the L-aspartate pocket. Residues arginine 2055, histidine 2083, and glutamine 2086 each contribute to the carbamoyl phosphate site. L-aspartate contacts are provided by arginine 2116 and arginine 2178. Carbamoyl phosphate-binding residues include leucine 2217 and proline 2218.

In the central section; belongs to the metallo-dependent hydrolases superfamily. DHOase family. CAD subfamily. This sequence in the N-terminal section; belongs to the CarA family. The protein in the 2nd section; belongs to the CarB family. It in the 3rd section; belongs to the metallo-dependent hydrolases superfamily. DHOase family. CAD subfamily. In the C-terminal section; belongs to the aspartate/ornithine carbamoyltransferase superfamily. ATCase family. Mg(2+) serves as cofactor. The cofactor is Mn(2+).

The catalysed reaction is hydrogencarbonate + L-glutamine + 2 ATP + H2O = carbamoyl phosphate + L-glutamate + 2 ADP + phosphate + 2 H(+). It carries out the reaction L-glutamine + H2O = L-glutamate + NH4(+). It catalyses the reaction hydrogencarbonate + NH4(+) + 2 ATP = carbamoyl phosphate + 2 ADP + phosphate + 2 H(+). The enzyme catalyses carbamoyl phosphate + L-aspartate = N-carbamoyl-L-aspartate + phosphate + H(+). Its pathway is pyrimidine metabolism; UMP biosynthesis via de novo pathway; (S)-dihydroorotate from bicarbonate: step 1/3. The protein operates within pyrimidine metabolism; UMP biosynthesis via de novo pathway; (S)-dihydroorotate from bicarbonate: step 2/3. In terms of biological role, multifunctional protein that encodes the first 2 enzymatic activities of the de novo pyrimidine pathway: carbamoylphosphate synthetase (CPSase; EC 6.3.5.5) and aspartate transcarbamylase (ATCase; EC 2.1.3.2). The CPSase-function is accomplished in 2 steps, by a glutamine-dependent amidotransferase activity (GATase) that binds and cleaves glutamine to produce ammonia, followed by an ammonium-dependent carbamoyl phosphate synthetase, which reacts with the ammonia, hydrogencarbonate and ATP to form carbamoyl phosphate. The endogenously produced carbamoyl phosphate is sequestered and channeled to the ATCase active site. ATCase then catalyzes the formation of carbamoyl-L-aspartate from L-aspartate and carbamoyl phosphate. In Emericella nidulans (strain FGSC A4 / ATCC 38163 / CBS 112.46 / NRRL 194 / M139) (Aspergillus nidulans), this protein is Multifunctional protein pyrABCN.